We begin with the raw amino-acid sequence, 445 residues long: 3-phosphoshikimate 1-carboxyvinyltransferase (445 aa).

Lys-28, Ser-29, and Arg-33 together coordinate 3-phosphoshikimate. Phosphoenolpyruvate is bound at residue Lys-28. Gly-101 and Arg-129 together coordinate phosphoenolpyruvate. Ser-175, Gln-177, Asp-328, and Lys-355 together coordinate 3-phosphoshikimate. Gln-177 contributes to the phosphoenolpyruvate binding site. The Proton acceptor role is filled by Asp-328. Phosphoenolpyruvate is bound by residues Arg-359 and Arg-402.

The protein belongs to the EPSP synthase family. In terms of assembly, monomer.

Its subcellular location is the cytoplasm. It carries out the reaction 3-phosphoshikimate + phosphoenolpyruvate = 5-O-(1-carboxyvinyl)-3-phosphoshikimate + phosphate. The protein operates within metabolic intermediate biosynthesis; chorismate biosynthesis; chorismate from D-erythrose 4-phosphate and phosphoenolpyruvate: step 6/7. Catalyzes the transfer of the enolpyruvyl moiety of phosphoenolpyruvate (PEP) to the 5-hydroxyl of shikimate-3-phosphate (S3P) to produce enolpyruvyl shikimate-3-phosphate and inorganic phosphate. In Rhodopseudomonas palustris (strain BisA53), this protein is 3-phosphoshikimate 1-carboxyvinyltransferase.